Consider the following 72-residue polypeptide: Translation initiation factor IF-1 1 (72 aa).

The 72-residue stretch at 1 to 72 (MSKDDVIQMA…TRARIIFRAK (72 aa)) folds into the S1-like domain.

It belongs to the IF-1 family. Component of the 30S ribosomal translation pre-initiation complex which assembles on the 30S ribosome in the order IF-2 and IF-3, IF-1 and N-formylmethionyl-tRNA(fMet); mRNA recruitment can occur at any time during PIC assembly.

The protein localises to the cytoplasm. Its function is as follows. One of the essential components for the initiation of protein synthesis. Stabilizes the binding of IF-2 and IF-3 on the 30S subunit to which N-formylmethionyl-tRNA(fMet) subsequently binds. Helps modulate mRNA selection, yielding the 30S pre-initiation complex (PIC). Upon addition of the 50S ribosomal subunit IF-1, IF-2 and IF-3 are released leaving the mature 70S translation initiation complex. The chain is Translation initiation factor IF-1 1 from Polynucleobacter asymbioticus (strain DSM 18221 / CIP 109841 / QLW-P1DMWA-1) (Polynucleobacter necessarius subsp. asymbioticus).